The primary structure comprises 505 residues: MAESAGASSFFPLVVLLLAGSGGSGPRGIQALLCACTSCLQTNYTCETDGACMVSIFNLDGMEHHVRTCIPKVELVPAGKPFYCLSSEDLRNTHCCYIDFCNKIDLRVPSGHLKEPEHPSMWGPVELVGIIAGPVFLLFLIIIIVFLVINYHQRVYHNRQRLDMEDPSCEMCLSKDKTLQDLVYDLSTSGSGSGLPLFVQRTVARTIVLQEIIGKGRFGEVWRGRWRGGDVAVKIFSSREERSWFREAEIYQTVMLRHENILGFIAADNKDNGTWTQLWLVSDYHEHGSLFDYLNRYTVTIEGMIKLALSAASGLAHLHMEIVGTQGKPGIAHRDLKSKNILVKKNGMCAIADLGLAVRHDAVTDTIDIAPNQRVGTKRYMAPEVLDETINMKHFDSFKCADIYALGLVYWEIARRCNSGGVHEEYQLPYYDLVPSDPSIEEMRKVVCDQKLRPNVPNWWQSYEALRVMGKMMRECWYANGAARLTALRIKKTLSQLSVQEDVKI.

An N-terminal signal peptide occupies residues 1–23 (MAESAGASSFFPLVVLLLAGSGG). At 24–126 (SGPRGIQALL…EHPSMWGPVE (103 aa)) the chain is on the extracellular side. Residue Asn43 is glycosylated (N-linked (GlcNAc...) asparagine). The helical transmembrane segment at 127 to 149 (LVGIIAGPVFLLFLIIIIVFLVI) threads the bilayer. The Cytoplasmic portion of the chain corresponds to 150-505 (NYHQRVYHNR…QLSVQEDVKI (356 aa)). One can recognise a GS domain in the interval 177–206 (KTLQDLVYDLSTSGSGSGLPLFVQRTVART). Positions 207 to 497 (IVLQEIIGKG…LRIKKTLSQL (291 aa)) constitute a Protein kinase domain. ATP contacts are provided by residues 213-221 (IGKGRFGEV) and Lys234. Asp335 serves as the catalytic Proton acceptor. Tyr380 is subject to Phosphotyrosine.

The protein belongs to the protein kinase superfamily. TKL Ser/Thr protein kinase family. TGFB receptor subfamily. As to quaternary structure, forms an activin receptor complex with activin receptor type-2 (ACVR2A or ACVR2B). Part of a complex consisting of MAGI2/ARIP1, ACVR2A, ACVR1B and SMAD3. Interacts with SMAD2 and SMAD3. Interacts with SMAD7. Interacts with FKBP1A. Interacts with IGSF1. Interacts with CRIPTO. Interacts with TDP2. Interacts with TSC22D1/TSC-22. Requires Mg(2+) as cofactor. Mn(2+) serves as cofactor. Autophosphorylated. Phosphorylated by activin receptor type-2 (ACVR2A or ACVR2B) in response to activin-binding at serine and threonine residues in the GS domain. Phosphorylation of ACVR1B by activin receptor type-2 regulates association with SMAD7. In terms of processing, ubiquitinated. Level of ubiquitination is regulated by the SMAD7-SMURF1 complex. Post-translationally, ubiquitinated. Urogenital ridge, testis, ovary, brain and lungs.

It is found in the cell membrane. It catalyses the reaction L-threonyl-[receptor-protein] + ATP = O-phospho-L-threonyl-[receptor-protein] + ADP + H(+). It carries out the reaction L-seryl-[receptor-protein] + ATP = O-phospho-L-seryl-[receptor-protein] + ADP + H(+). With respect to regulation, activin receptor type-2 (ACVR2A or ACVR2B) activates the type-1 receptor through phosphorylation of its regulatory GS domain. Its function is as follows. Transmembrane serine/threonine kinase activin type-1 receptor forming an activin receptor complex with activin receptor type-2 (ACVR2A or ACVR2B). Transduces the activin signal from the cell surface to the cytoplasm and is thus regulating a many physiological and pathological processes including neuronal differentiation and neuronal survival, hair follicle development and cycling, FSH production by the pituitary gland, wound healing, extracellular matrix production, immunosuppression and carcinogenesis. Activin is also thought to have a paracrine or autocrine role in follicular development in the ovary. Within the receptor complex, type-2 receptors (ACVR2A and/or ACVR2B) act as a primary activin receptors whereas the type-1 receptors like ACVR1B act as downstream transducers of activin signals. Activin binds to type-2 receptor at the plasma membrane and activates its serine-threonine kinase. The activated receptor type-2 then phosphorylates and activates the type-1 receptor such as ACVR1B. Once activated, the type-1 receptor binds and phosphorylates the SMAD proteins SMAD2 and SMAD3, on serine residues of the C-terminal tail. Soon after their association with the activin receptor and subsequent phosphorylation, SMAD2 and SMAD3 are released into the cytoplasm where they interact with the common partner SMAD4. This SMAD complex translocates into the nucleus where it mediates activin-induced transcription. Inhibitory SMAD7, which is recruited to ACVR1B through FKBP1A, can prevent the association of SMAD2 and SMAD3 with the activin receptor complex, thereby blocking the activin signal. Activin signal transduction is also antagonized by the binding to the receptor of inhibin-B via the IGSF1 inhibin coreceptor. ACVR1B also phosphorylates TDP2. In Rattus norvegicus (Rat), this protein is Activin receptor type-1B (Acvr1b).